The following is an 87-amino-acid chain: uncharacterized protein (87 aa).

The N-terminal stretch at 1-22 (MKIKTTVAALSVLSVLSFGAFA) is a signal peptide.

This sequence belongs to the BhsA/McbA family.

The protein localises to the periplasm. This is an uncharacterized protein from Escherichia coli O6:H1 (strain CFT073 / ATCC 700928 / UPEC).